The primary structure comprises 101 residues: Iron-sulfur cluster assembly protein CyaY (101 aa).

It belongs to the frataxin family.

Involved in iron-sulfur (Fe-S) cluster assembly. May act as a regulator of Fe-S biogenesis. This Actinobacillus pleuropneumoniae serotype 5b (strain L20) protein is Iron-sulfur cluster assembly protein CyaY.